The primary structure comprises 182 residues: Troponin I, fast skeletal muscle (182 aa).

Residue G2 is modified to N-acetylglycine. Positions 2 to 48 (GDEEKRNRAITARRQHLKSVMLQIAATELEKEESRREAEKQNYLAEH) are involved in binding TNC. T12 carries the post-translational modification Phosphothreonine. An involved in binding TNC and actin region spans residues 97-117 (NQKLFDLRGKFKRPPLRRVRM). Residue S118 is modified to Phosphoserine.

Belongs to the troponin I family. Binds to actin and tropomyosin.

Troponin I is the inhibitory subunit of troponin, the thin filament regulatory complex which confers calcium-sensitivity to striated muscle actomyosin ATPase activity. The chain is Troponin I, fast skeletal muscle (TNNI2) from Homo sapiens (Human).